A 331-amino-acid polypeptide reads, in one-letter code: Glyceraldehyde-3-phosphate dehydrogenase (331 aa).

NAD(+)-binding positions include 11 to 12 (RI), Asp33, and Arg78. Residues 148–150 (SCT), Thr179, 208–209 (TG), and Arg231 each bind D-glyceraldehyde 3-phosphate. Residue Cys149 is the Nucleophile of the active site. Asn313 contacts NAD(+).

This sequence belongs to the glyceraldehyde-3-phosphate dehydrogenase family. As to quaternary structure, homotetramer.

Its subcellular location is the cytoplasm. The enzyme catalyses D-glyceraldehyde 3-phosphate + phosphate + NAD(+) = (2R)-3-phospho-glyceroyl phosphate + NADH + H(+). It participates in carbohydrate degradation; glycolysis; pyruvate from D-glyceraldehyde 3-phosphate: step 1/5. In Eremothecium gossypii (strain ATCC 10895 / CBS 109.51 / FGSC 9923 / NRRL Y-1056) (Yeast), this protein is Glyceraldehyde-3-phosphate dehydrogenase (GPD).